The chain runs to 237 residues: Concanavalin-A (237 aa).

Residues E8 and D10 each coordinate Mn(2+). D10, Y12, N14, and D19 together coordinate Ca(2+). Y12 contacts a carbohydrate. Residues D19 and H24 each contribute to the Mn(2+) site. Position 99 to 100 (L99 to Y100) interacts with a carbohydrate. D208 contacts Ca(2+). Residue R228 participates in a carbohydrate binding.

It belongs to the leguminous lectin family. In terms of assembly, homotetramer.

In terms of biological role, glucose/D-mannose specific lectin. The sequence is that of Concanavalin-A from Canavalia lineata (Beach bean).